We begin with the raw amino-acid sequence, 411 residues long: Glutamate dehydrogenase (411 aa).

Residue Lys102 is part of the active site.

This sequence belongs to the Glu/Leu/Phe/Val dehydrogenases family.

The enzyme catalyses L-glutamate + NAD(+) + H2O = 2-oxoglutarate + NH4(+) + NADH + H(+). The catalysed reaction is L-glutamate + NADP(+) + H2O = 2-oxoglutarate + NH4(+) + NADPH + H(+). In Zea mays (Maize), this protein is Glutamate dehydrogenase (GDH1).